The chain runs to 382 residues: D-galactonate dehydratase (382 aa).

A Mg(2+)-binding site is contributed by Asp183. His185 acts as the Proton donor in catalysis. The Mg(2+) site is built by Glu209 and Glu235. Catalysis depends on His285, which acts as the Proton acceptor.

Belongs to the mandelate racemase/muconate lactonizing enzyme family. GalD subfamily. Mg(2+) serves as cofactor.

The enzyme catalyses D-galactonate = 2-dehydro-3-deoxy-D-galactonate + H2O. The protein operates within carbohydrate acid metabolism; D-galactonate degradation; D-glyceraldehyde 3-phosphate and pyruvate from D-galactonate: step 1/3. Catalyzes the dehydration of D-galactonate to 2-keto-3-deoxy-D-galactonate. This is D-galactonate dehydratase from Verminephrobacter eiseniae (strain EF01-2).